The sequence spans 552 residues: Hydroxylamine reductase (552 aa).

4 residues coordinate [2Fe-2S] cluster: C5, C8, C20, and C27. H251, E275, C319, C407, C435, C460, E494, and K496 together coordinate hybrid [4Fe-2O-2S] cluster. C407 is subject to Cysteine persulfide.

The protein belongs to the HCP family. [2Fe-2S] cluster serves as cofactor. Hybrid [4Fe-2O-2S] cluster is required as a cofactor.

The protein localises to the cytoplasm. It catalyses the reaction A + NH4(+) + H2O = hydroxylamine + AH2 + H(+). Functionally, catalyzes the reduction of hydroxylamine to form NH(3) and H(2)O. This is Hydroxylamine reductase from Escherichia coli (strain UTI89 / UPEC).